A 194-amino-acid polypeptide reads, in one-letter code: MILSDRDIKKYLEEGKLVIHPIDDPQKQIQPSSVDLRLGNSFLHFKVEGRAYIDPTQDSPQELMEIIEIEEGKPFFLRPGEFVLGTTIETVKLPDDLVARVDGRSSLGRLGIIVHATAGYVDPGFCGQITLELSNINRVPVALYPGMRICQISFYKLSSPAETPYYKKAGSKYHNQKGPTASRLNIDFCKKEEK.

Residues 104–109, Asp122, 130–132, Gln151, Tyr165, Lys172, and Gln176 contribute to the dCTP site; these read RSSLGR and TLE. The Proton donor/acceptor role is filled by Glu132.

Belongs to the dCTP deaminase family. In terms of assembly, homotrimer.

The catalysed reaction is dCTP + 2 H2O = dUMP + NH4(+) + diphosphate. The protein operates within pyrimidine metabolism; dUMP biosynthesis; dUMP from dCTP: step 1/1. In terms of biological role, bifunctional enzyme that catalyzes both the deamination of dCTP to dUTP and the hydrolysis of dUTP to dUMP without releasing the toxic dUTP intermediate. In Dictyoglomus thermophilum (strain ATCC 35947 / DSM 3960 / H-6-12), this protein is dCTP deaminase, dUMP-forming.